A 334-amino-acid polypeptide reads, in one-letter code: Porphobilinogen deaminase (334 aa).

C255 is modified (S-(dipyrrolylmethanemethyl)cysteine).

The protein belongs to the HMBS family. Monomer. The cofactor is dipyrromethane.

It catalyses the reaction 4 porphobilinogen + H2O = hydroxymethylbilane + 4 NH4(+). It functions in the pathway porphyrin-containing compound metabolism; protoporphyrin-IX biosynthesis; coproporphyrinogen-III from 5-aminolevulinate: step 2/4. In terms of biological role, tetrapolymerization of the monopyrrole PBG into the hydroxymethylbilane pre-uroporphyrinogen in several discrete steps. The polypeptide is Porphobilinogen deaminase (Burkholderia orbicola (strain MC0-3)).